The following is a 40-amino-acid chain: Auxin-responsive endogenous peptide 1 (40 aa).

Residues 7-29 (LIYRLVVRCFLDYSICAPFYFYH) form a helical membrane-spanning segment.

As to expression, expressed in cotyledons, hypocotyls, roots, newly developing leaves and shoot apical meristem. Not detected in flowers, siliques or mature leaves.

Its subcellular location is the cytoplasm. It localises to the nucleus. The protein resides in the membrane. Negative regulator of the auxin response. This is Auxin-responsive endogenous peptide 1 from Arabidopsis thaliana (Mouse-ear cress).